Consider the following 966-residue polypeptide: Glycine dehydrogenase (decarboxylating) (966 aa).

Lysine 713 is modified (N6-(pyridoxal phosphate)lysine).

The protein belongs to the GcvP family. The glycine cleavage system is composed of four proteins: P, T, L and H. It depends on pyridoxal 5'-phosphate as a cofactor.

It carries out the reaction N(6)-[(R)-lipoyl]-L-lysyl-[glycine-cleavage complex H protein] + glycine + H(+) = N(6)-[(R)-S(8)-aminomethyldihydrolipoyl]-L-lysyl-[glycine-cleavage complex H protein] + CO2. Functionally, the glycine cleavage system catalyzes the degradation of glycine. The P protein binds the alpha-amino group of glycine through its pyridoxal phosphate cofactor; CO(2) is released and the remaining methylamine moiety is then transferred to the lipoamide cofactor of the H protein. The protein is Glycine dehydrogenase (decarboxylating) of Shewanella halifaxensis (strain HAW-EB4).